A 900-amino-acid chain; its full sequence is Endoglucanase H (900 aa).

Positions 1–44 (MKKRLLVSFLVLSIIVGLLSFQSLGNYNSGLKIGAWVGTQPSES) are cleaved as a signal peptide. A GH26 domain is found at 45–298 (AIKSFQELQG…NSSPEALAAY (254 aa)). Glutamate 131 serves as the catalytic Proton donor. The Nucleophile role is filled by glutamate 244. Positions 300–630 (EAIGAGSSNP…DTEILNALFN (331 aa)) are catalytic. Residues 303–326 (GAGSSNPTPTPTWTSTPPSSSPKA) are disordered. Residues 306 to 324 (SSNPTPTPTWTSTPPSSSP) are compositionally biased toward low complexity. Glutamate 460 serves as the catalytic Proton donor. The Nucleophile role is filled by glutamate 565. Positions 655–900 (AVGEKMLDDF…LLKAISEIPI (246 aa)) constitute a CBM11 domain. In terms of domain architecture, Dockerin spans 827-900 (PSIKHGDLNF…LLKAISEIPI (74 aa)).

The protein in the N-terminal section; belongs to the glycosyl hydrolase 5 (cellulase A) family. In the C-terminal section; belongs to the glycosyl hydrolase 26 family.

It carries out the reaction Endohydrolysis of (1-&gt;4)-beta-D-glucosidic linkages in cellulose, lichenin and cereal beta-D-glucans.. Its function is as follows. This enzyme catalyzes the endohydrolysis of 1,4-beta-glucosidic linkages in cellulose, lichenin and cereal beta-D-glucans. In Acetivibrio thermocellus (strain ATCC 27405 / DSM 1237 / JCM 9322 / NBRC 103400 / NCIMB 10682 / NRRL B-4536 / VPI 7372) (Clostridium thermocellum), this protein is Endoglucanase H (celH).